Here is a 1222-residue protein sequence, read N- to C-terminus: ATP-dependent helicase/nuclease subunit A (1222 aa).

Positions 39–495 (QKRTAQQIEA…ILLKENFRSQ (457 aa)) constitute a UvrD-like helicase ATP-binding domain. 60–67 (ASAGSGKT) serves as a coordination point for ATP. In terms of domain architecture, UvrD-like helicase C-terminal spans 524-810 (QLIAGSHAQT…NLMTIHKSKG (287 aa)).

This sequence belongs to the helicase family. AddA subfamily. In terms of assembly, heterodimer of AddA and AddB/RexB. Mg(2+) is required as a cofactor.

The catalysed reaction is Couples ATP hydrolysis with the unwinding of duplex DNA by translocating in the 3'-5' direction.. The enzyme catalyses ATP + H2O = ADP + phosphate + H(+). Functionally, the heterodimer acts as both an ATP-dependent DNA helicase and an ATP-dependent, dual-direction single-stranded exonuclease. Recognizes the chi site generating a DNA molecule suitable for the initiation of homologous recombination. The AddA nuclease domain is required for chi fragment generation; this subunit has the helicase and 3' -&gt; 5' nuclease activities. The sequence is that of ATP-dependent helicase/nuclease subunit A from Streptococcus pyogenes serotype M2 (strain MGAS10270).